A 644-amino-acid polypeptide reads, in one-letter code: DNA mismatch repair protein MutL (644 aa).

Positions 363–405 are disordered; that stretch reads GTFNPFTDDKTNQHYTKAGSGSGSGYSSGSSSSSGSGSGSSYS. Over residues 389–405 the composition is skewed to low complexity; that stretch reads SSGSSSSSGSGSGSSYS.

This sequence belongs to the DNA mismatch repair MutL/HexB family.

Functionally, this protein is involved in the repair of mismatches in DNA. It is required for dam-dependent methyl-directed DNA mismatch repair. May act as a 'molecular matchmaker', a protein that promotes the formation of a stable complex between two or more DNA-binding proteins in an ATP-dependent manner without itself being part of a final effector complex. The polypeptide is DNA mismatch repair protein MutL (Flavobacterium johnsoniae (strain ATCC 17061 / DSM 2064 / JCM 8514 / BCRC 14874 / CCUG 350202 / NBRC 14942 / NCIMB 11054 / UW101) (Cytophaga johnsonae)).